Reading from the N-terminus, the 434-residue chain is Tol-Pal system protein TolB (434 aa).

Positions 1–24 (MKFSAYLTTLFIVLFSLFIQTVQA) are cleaved as a signal peptide.

Belongs to the TolB family. The Tol-Pal system is composed of five core proteins: the inner membrane proteins TolA, TolQ and TolR, the periplasmic protein TolB and the outer membrane protein Pal. They form a network linking the inner and outer membranes and the peptidoglycan layer.

It is found in the periplasm. In terms of biological role, part of the Tol-Pal system, which plays a role in outer membrane invagination during cell division and is important for maintaining outer membrane integrity. This is Tol-Pal system protein TolB from Histophilus somni (strain 2336) (Haemophilus somnus).